Here is a 259-residue protein sequence, read N- to C-terminus: Nodulation protein J (259 aa).

An ABC transmembrane type-2 domain is found at 30-256 (ASILGNLADP…LVSTALLRRR (227 aa)). Helical transmembrane passes span 32–52 (ILGNLADPVIYLFGLGAGLGV), 64–84 (AFLAAGMIATSAMTAATFETI), 116–136 (AWAATKASLAGTGIGIVAAML), 141–161 (WLALLYALPVIAITGLAFASL), 174–194 (YFIFYQTLVITPMLFLSGAVF), and 228–248 (IANVCLHIGVLCIYIVVPFLV).

This sequence belongs to the ABC-2 integral membrane protein family. Lipooligosaccharide exporter (TC 3.A.1.102) subfamily. The complex is composed of two ATP-binding proteins (NodI) and two transmembrane proteins (NodJ).

It is found in the cell inner membrane. Part of the ABC transporter complex NodIJ involved in the export of the nodulation factors (Nod factors), the bacterial signal molecules that induce symbiosis and subsequent nodulation induction. Nod factors are LCO (lipo-chitin oligosaccharide), a modified beta-1,4-linked N-acetylglucosamine oligosaccharide. This subunit encodes the transporter. This chain is Nodulation protein J (nodJ), found in Rhizobium leguminosarum bv. viciae.